The following is a 557-amino-acid chain: Venom carboxylesterase-6 (557 aa).

An N-terminal signal peptide occupies residues Met-1–Gln-21. The cysteines at positions 88 and 108 are disulfide-linked. A glycan (N-linked (GlcNAc...) asparagine) is linked at Asn-145. The active-site Acyl-ester intermediate is the Ser-212. An intrachain disulfide couples Cys-264 to Cys-275. The active-site Charge relay system is Glu-341. Residue Asn-374 is glycosylated (N-linked (GlcNAc...) asparagine). His-464 acts as the Charge relay system in catalysis. 3 N-linked (GlcNAc...) asparagine glycosylation sites follow: Asn-478, Asn-528, and Asn-542.

The protein belongs to the type-B carboxylesterase/lipase family. In terms of tissue distribution, expressed by the venom gland.

The protein resides in the secreted. The catalysed reaction is a carboxylic ester + H2O = an alcohol + a carboxylate + H(+). The polypeptide is Venom carboxylesterase-6 (Apis mellifera (Honeybee)).